Consider the following 86-residue polypeptide: Weak neurotoxin 8 (86 aa).

An N-terminal signal peptide occupies residues 1–21; sequence MKTLLLTLVVVTIVCLDLGYT. Disulfide bonds link Cys24–Cys45, Cys27–Cys32, Cys38–Cys63, Cys67–Cys78, and Cys79–Cys84.

It belongs to the three-finger toxin family. Ancestral subfamily. Orphan group II sub-subfamily. Expressed by the venom gland.

Its subcellular location is the secreted. In terms of biological role, binds with low affinity to muscular (alpha-1-beta-1-delta-epsilon/CHRNA1-CHRNB1-CHRND-CHRNE) and very low affinity to neuronal (alpha-7/CHRNA7) nicotinic acetylcholine receptor (nAChR). The chain is Weak neurotoxin 8 from Naja sputatrix (Malayan spitting cobra).